The sequence spans 343 residues: Holliday junction branch migration complex subunit RuvB (343 aa).

The segment at 1–23 is disordered; that stretch reads MSDDFEVVRPEEQAGDEKDRDLR. The segment at 1 to 183 is large ATPase domain (RuvB-L); sequence MSDDFEVVRP…FGIVQRFEFY (183 aa). Residues Leu-22, Arg-23, Gly-64, Lys-67, Thr-68, Thr-69, 130–132, Arg-173, Tyr-183, and Arg-220 each bind ATP; that span reads EDY. Thr-68 lines the Mg(2+) pocket. The interval 184-254 is small ATPAse domain (RuvB-S); it reads SHEELASIIS…TVAAGLKQLN (71 aa). The tract at residues 257–343 is head domain (RuvB-H); it reads GLGLETYDRQ…LGDGQEGLFD (87 aa). Positions 312 and 317 each coordinate DNA.

Belongs to the RuvB family. Homohexamer. Forms an RuvA(8)-RuvB(12)-Holliday junction (HJ) complex. HJ DNA is sandwiched between 2 RuvA tetramers; dsDNA enters through RuvA and exits via RuvB. An RuvB hexamer assembles on each DNA strand where it exits the tetramer. Each RuvB hexamer is contacted by two RuvA subunits (via domain III) on 2 adjacent RuvB subunits; this complex drives branch migration. In the full resolvosome a probable DNA-RuvA(4)-RuvB(12)-RuvC(2) complex forms which resolves the HJ.

It localises to the cytoplasm. The enzyme catalyses ATP + H2O = ADP + phosphate + H(+). In terms of biological role, the RuvA-RuvB-RuvC complex processes Holliday junction (HJ) DNA during genetic recombination and DNA repair, while the RuvA-RuvB complex plays an important role in the rescue of blocked DNA replication forks via replication fork reversal (RFR). RuvA specifically binds to HJ cruciform DNA, conferring on it an open structure. The RuvB hexamer acts as an ATP-dependent pump, pulling dsDNA into and through the RuvAB complex. RuvB forms 2 homohexamers on either side of HJ DNA bound by 1 or 2 RuvA tetramers; 4 subunits per hexamer contact DNA at a time. Coordinated motions by a converter formed by DNA-disengaged RuvB subunits stimulates ATP hydrolysis and nucleotide exchange. Immobilization of the converter enables RuvB to convert the ATP-contained energy into a lever motion, pulling 2 nucleotides of DNA out of the RuvA tetramer per ATP hydrolyzed, thus driving DNA branch migration. The RuvB motors rotate together with the DNA substrate, which together with the progressing nucleotide cycle form the mechanistic basis for DNA recombination by continuous HJ branch migration. Branch migration allows RuvC to scan DNA until it finds its consensus sequence, where it cleaves and resolves cruciform DNA. The polypeptide is Holliday junction branch migration complex subunit RuvB (Treponema denticola (strain ATCC 35405 / DSM 14222 / CIP 103919 / JCM 8153 / KCTC 15104)).